The primary structure comprises 146 residues: Hemoglobin subunit beta (146 aa).

V1 bears the N-acetylvaline mark. The Globin domain maps to 2–146 (HLTDAEKAAI…VATALGHKYH (145 aa)). At K59 the chain carries N6-acetyllysine. Position 63 (H63) interacts with heme b. The residue at position 82 (K82) is an N6-acetyllysine. H92 is a binding site for heme b. C93 is subject to S-nitrosocysteine. K144 is modified (N6-acetyllysine).

Belongs to the globin family. Heterotetramer of two alpha chains and two beta chains. Red blood cells.

Functionally, involved in oxygen transport from the lung to the various peripheral tissues. The polypeptide is Hemoglobin subunit beta (HBB) (Ondatra zibethicus (Muskrat)).